Reading from the N-terminus, the 462-residue chain is tRNA modification GTPase MnmE (462 aa).

Positions 27, 89, and 128 each coordinate (6S)-5-formyl-5,6,7,8-tetrahydrofolate. The region spanning 223–383 (GLKIAIVGRP…LEAAILAAVG (161 aa)) is the TrmE-type G domain. A K(+)-binding site is contributed by Asn-233. Residues 233 to 238 (NVGKSS), 252 to 258 (TDLPGTT), and 277 to 280 (DTAG) each bind GTP. Position 237 (Ser-237) interacts with Mg(2+). 3 residues coordinate K(+): Thr-252, Leu-254, and Thr-257. Thr-258 contributes to the Mg(2+) binding site. (6S)-5-formyl-5,6,7,8-tetrahydrofolate is bound at residue Lys-462.

This sequence belongs to the TRAFAC class TrmE-Era-EngA-EngB-Septin-like GTPase superfamily. TrmE GTPase family. In terms of assembly, homodimer. Heterotetramer of two MnmE and two MnmG subunits. The cofactor is K(+).

The protein localises to the cytoplasm. Exhibits a very high intrinsic GTPase hydrolysis rate. Involved in the addition of a carboxymethylaminomethyl (cmnm) group at the wobble position (U34) of certain tRNAs, forming tRNA-cmnm(5)s(2)U34. The protein is tRNA modification GTPase MnmE of Synechococcus elongatus (strain ATCC 33912 / PCC 7942 / FACHB-805) (Anacystis nidulans R2).